The sequence spans 681 residues: Proline dehydrogenase 1, mitochondrial (681 aa).

The transit peptide at 1 to 30 (MALLRSLSAQRTAISLVYGRNSSKSSNSVA) directs the protein to the mitochondrion. Residues 76-87 (STLVQPEVVSSE) show a composition bias toward polar residues. 2 disordered regions span residues 76–113 (STLVQPEVVSSETVKRSMKQESSQEKNPSPAGSPQRDP) and 216–239 (EEAEKREVESSVSSAGDKKEEGSM). Basic and acidic residues predominate over residues 88–99 (TVKRSMKQESSQ).

Belongs to the proline oxidase family. FAD is required as a cofactor. As to expression, most abundant in developing nervous system.

The protein resides in the mitochondrion matrix. It carries out the reaction L-proline + a quinone = (S)-1-pyrroline-5-carboxylate + a quinol + H(+). It participates in amino-acid degradation; L-proline degradation into L-glutamate; L-glutamate from L-proline: step 1/2. In terms of biological role, converts proline to delta-1-pyrroline-5-carboxylate. Involved in the conversion of proline to glutamate, which functions as a transmitter at neuromuscular junctions. Glutamate deficiency could possibly account for reduced motor activity. This chain is Proline dehydrogenase 1, mitochondrial (slgA), found in Drosophila melanogaster (Fruit fly).